The following is a 206-amino-acid chain: Small ribosomal subunit protein uS4 (206 aa).

One can recognise an S4 RNA-binding domain in the interval 96–156 (GRLDNVVYRM…EKSKKQARIK (61 aa)).

It belongs to the universal ribosomal protein uS4 family. As to quaternary structure, part of the 30S ribosomal subunit. Contacts protein S5. The interaction surface between S4 and S5 is involved in control of translational fidelity.

In terms of biological role, one of the primary rRNA binding proteins, it binds directly to 16S rRNA where it nucleates assembly of the body of the 30S subunit. Its function is as follows. With S5 and S12 plays an important role in translational accuracy. This is Small ribosomal subunit protein uS4 from Haemophilus influenzae (strain ATCC 51907 / DSM 11121 / KW20 / Rd).